The chain runs to 581 residues: Zinc metalloproteinase nas-36 (581 aa).

Residues 1–95 (MKEIAHSQAY…FRGANEKGKR (95 aa)) constitute a propeptide that is removed on maturation. Asn67 carries N-linked (GlcNAc...) asparagine glycosylation. Residues 97–290 (AAEYDAKWFQ…IKLINEAYCK (194 aa)) enclose the Peptidase M12A domain. Intrachain disulfides connect Cys137–Cys289, Cys159–Cys178, Cys293–Cys313, Cys315–Cys324, and Cys336–Cys364. His186 provides a ligand contact to Zn(2+). The active site involves Glu187. His190 and His196 together coordinate Zn(2+). Residues 285-325 (NEAYCKGDCKEKNECKNGGYLNPSNCQSCLCPSGFGGSKCE) enclose the EGF-like domain. Residues 336 to 449 (CGGTLKAIID…TGFKLKFRKT (114 aa)) enclose the CUB domain. A glycan (N-linked (GlcNAc...) asparagine) is linked at Asn418. In terms of domain architecture, TSP type-1 spans 474–523 (NDIWSEWGEWSQCSRSCGACGIKSRLRICKTAQCSGKVQQFLTCNLQACP). Disulfide bonds link Cys486–Cys517, Cys490–Cys522, and Cys502–Cys507.

Requires Zn(2+) as cofactor.

The protein resides in the secreted. Its activity is regulated as follows. Inhibited by 1,10-phenanthroline. Its function is as follows. Metalloprotease. Involved in molting, a process during larval stages in which a new cuticle is formed and the old cuticle is shed. The protein is Zinc metalloproteinase nas-36 of Brugia malayi (Filarial nematode worm).